We begin with the raw amino-acid sequence, 215 residues long: 3-demethoxyubiquinol 3-hydroxylase (215 aa).

The Fe cation site is built by glutamate 64, glutamate 94, histidine 97, glutamate 146, glutamate 178, and histidine 181.

Belongs to the COQ7 family. Fe cation serves as cofactor.

It is found in the cell membrane. The catalysed reaction is a 5-methoxy-2-methyl-3-(all-trans-polyprenyl)benzene-1,4-diol + AH2 + O2 = a 3-demethylubiquinol + A + H2O. It functions in the pathway cofactor biosynthesis; ubiquinone biosynthesis. In terms of biological role, catalyzes the hydroxylation of 2-nonaprenyl-3-methyl-6-methoxy-1,4-benzoquinol during ubiquinone biosynthesis. This is 3-demethoxyubiquinol 3-hydroxylase from Azotobacter vinelandii (strain DJ / ATCC BAA-1303).